We begin with the raw amino-acid sequence, 414 residues long: Serine/threonine transporter SstT (414 aa).

Topologically, residues 2–15 (TTQRSPGLFRRLAH) are cytoplasmic. A helical transmembrane segment spans residues 16–36 (GSLVKQILVGLVLGILLAWIS). The Periplasmic segment spans residues 37-45 (KPAAEAVGL). The chain crosses the membrane as a helical span at residues 46–66 (LGTLFVGALKAVAPILVLMLV). At 67–83 (MASIANHQHGQKTNILP) the chain is on the cytoplasmic side. A helical membrane pass occupies residues 84 to 104 (ILFLYLLGTFSAALAAVVFSF). Residues 105–142 (AFPSTLHLSSSAGDISPPSGIVEVMRGLVMSMVSNPID) lie on the Periplasmic side of the membrane. Residues 143-163 (ALLKGNYIGILVWAIGLGFAL) form a helical membrane-spanning segment. Topologically, residues 164 to 179 (RHGNETTKNLVNDMSN) are cytoplasmic. The chain crosses the membrane as a helical span at residues 180 to 200 (AVTFMVKLVIRFAPIGIFGLV). Over 201-217 (SSTLATTGFSTLWGYAQ) the chain is Periplasmic. A helical membrane pass occupies residues 218–238 (LLVVLVGCMLLVALVVNPLLV). At 239 to 299 (WWKIRRNPFP…VSIPLGATIN (61 aa)) the chain is on the cytoplasmic side. Residues 300–320 (MAGAAITITVLTLAAVNTLGI) traverse the membrane as a helical segment. Topologically, residues 321–331 (PVDLPTALLLS) are periplasmic. A helical membrane pass occupies residues 332-352 (VVASLCACGASGVAGGSLLLI). Residues 353–414 (PLACNMFGIS…DRLANSALRN (62 aa)) lie on the Cytoplasmic side of the membrane.

Belongs to the dicarboxylate/amino acid:cation symporter (DAACS) (TC 2.A.23) family.

The protein localises to the cell inner membrane. It catalyses the reaction L-serine(in) + Na(+)(in) = L-serine(out) + Na(+)(out). The enzyme catalyses L-threonine(in) + Na(+)(in) = L-threonine(out) + Na(+)(out). Its function is as follows. Involved in the import of serine and threonine into the cell, with the concomitant import of sodium (symport system). In Shigella dysenteriae serotype 1 (strain Sd197), this protein is Serine/threonine transporter SstT.